The following is a 1077-amino-acid chain: Tudor domain-containing protein 7 (1077 aa).

2 HTH OST-type domains span residues 1–67 and 220–289; these read MLRA…YAVV and DLSV…LYST. Polar residues predominate over residues 300 to 328; it reads VQNHSNNQAKPNVPVDSTPSSPPLQSSGN. Residues 300–331 form a disordered region; sequence VQNHSNNQAKPNVPVDSTPSSPPLQSSGNIPK. The region spanning 330–398 is the HTH OST-type 3 domain; the sequence is PKDELKQKIS…PFKAILYAKS (69 aa). Tudor domains follow at residues 494-551 and 684-741; these read FLRV…FYTL and LPFC…LLRD. The segment at 841–883 is disordered; that stretch reads SRGGGAQASELSPPGLCKDHTSAVKKPDMQQSSSVPSFNMPPP. The span at 857–868 shows a compositional bias: basic and acidic residues; that stretch reads CKDHTSAVKKPD.

Belongs to the TDRD7 family.

The protein localises to the cytoplasm. In terms of biological role, component of specific cytoplasmic RNA granules involved in post-transcriptional regulation of specific genes: probably acts by binding to specific mRNAs and regulating their translation. Probably required during spermatogenesis. The sequence is that of Tudor domain-containing protein 7 (tdrd7) from Xenopus tropicalis (Western clawed frog).